The primary structure comprises 520 residues: Cytochrome P450 6d3 (520 aa).

Cys461 contacts heme.

The protein belongs to the cytochrome P450 family. It depends on heme as a cofactor.

Its subcellular location is the endoplasmic reticulum membrane. The protein localises to the microsome membrane. In terms of biological role, metabolizes pyrethroid insecticides and other xenobiotics. The protein is Cytochrome P450 6d3 (CYP6D3) of Musca domestica (House fly).